The sequence spans 110 residues: MEAIAKHNFARISPQKARLVADLIRGKSVDQALEILTFSNKKAAALVKKVLESAIANAEHNEGADIDDLNVAKIFVDEGPTMKRIMPRAKGRADRILKRSSHITVVVADR.

This sequence belongs to the universal ribosomal protein uL22 family. Part of the 50S ribosomal subunit.

Functionally, this protein binds specifically to 23S rRNA; its binding is stimulated by other ribosomal proteins, e.g. L4, L17, and L20. It is important during the early stages of 50S assembly. It makes multiple contacts with different domains of the 23S rRNA in the assembled 50S subunit and ribosome. Its function is as follows. The globular domain of the protein is located near the polypeptide exit tunnel on the outside of the subunit, while an extended beta-hairpin is found that lines the wall of the exit tunnel in the center of the 70S ribosome. In Vibrio parahaemolyticus serotype O3:K6 (strain RIMD 2210633), this protein is Large ribosomal subunit protein uL22.